Here is a 1217-residue protein sequence, read N- to C-terminus: Sterol 3-beta-glucosyltransferase (1217 aa).

Residues 195-232 (EFVRKYFGISEEETLIGHYTGWLLQEVLIQGNLFITNS) enclose the GRAM 1 domain. A PH domain is found at 246–343 (AVVLCGKLKL…WVKCLKKQLF (98 aa)). Positions 590–656 (AKIKDWFNLH…EDIEGYNEIL (67 aa)) constitute a GRAM 2 domain. UDP-alpha-D-glucose contacts are provided by S766, R767, D769, N1042, I1072, H1074, H1087, S1090, G1091, T1092, D1111, and Q1112.

Belongs to the glycosyltransferase 28 family.

It is found in the cytoplasm. Its subcellular location is the membrane. The enzyme catalyses a sterol + UDP-alpha-D-glucose = a sterol 3-beta-D-glucoside + UDP + H(+). It carries out the reaction ergosterol + UDP-alpha-D-glucose = ergosteryl 3-beta-D-glucoside + UDP + H(+). Sterol glycosyltransferase responsible for the glycosylation of ergosterol to form ergosterol-glucoside. The polypeptide is Sterol 3-beta-glucosyltransferase (Vanderwaltozyma polyspora (strain ATCC 22028 / DSM 70294 / BCRC 21397 / CBS 2163 / NBRC 10782 / NRRL Y-8283 / UCD 57-17) (Kluyveromyces polysporus)).